A 394-amino-acid polypeptide reads, in one-letter code: Phosphoglycerate kinase (394 aa).

Residues 21-23 (DFN), arginine 36, 59-62 (HLGR), arginine 118, and arginine 151 each bind substrate. At serine 183 the chain carries Phosphoserine. Residue lysine 201 participates in ATP binding. Residue threonine 299 is modified to Phosphothreonine. ATP-binding positions include glutamate 323 and 350–353 (GGDS).

The protein belongs to the phosphoglycerate kinase family. Monomer.

The protein resides in the cytoplasm. It catalyses the reaction (2R)-3-phosphoglycerate + ATP = (2R)-3-phospho-glyceroyl phosphate + ADP. It participates in carbohydrate degradation; glycolysis; pyruvate from D-glyceraldehyde 3-phosphate: step 2/5. The protein is Phosphoglycerate kinase of Halalkalibacterium halodurans (strain ATCC BAA-125 / DSM 18197 / FERM 7344 / JCM 9153 / C-125) (Bacillus halodurans).